We begin with the raw amino-acid sequence, 806 residues long: Lon protease (806 aa).

The Lon N-terminal domain maps to 13–206; that stretch reads LPMMPIRDVV…RVAEMLDIEI (194 aa). Position 356–363 (356–363) interacts with ATP; that stretch reads GPPGVGKT. The region spanning 599–780 is the Lon proteolytic domain; sequence KNEIGAATGL…DEVLKIALER (182 aa). Catalysis depends on residues serine 686 and lysine 729.

Belongs to the peptidase S16 family. In terms of assembly, homohexamer. Organized in a ring with a central cavity.

The protein resides in the cytoplasm. It carries out the reaction Hydrolysis of proteins in presence of ATP.. Its function is as follows. ATP-dependent serine protease that mediates the selective degradation of mutant and abnormal proteins as well as certain short-lived regulatory proteins. Required for cellular homeostasis and for survival from DNA damage and developmental changes induced by stress. Degrades polypeptides processively to yield small peptide fragments that are 5 to 10 amino acids long. Binds to DNA in a double-stranded, site-specific manner. The sequence is that of Lon protease from Solibacter usitatus (strain Ellin6076).